Consider the following 824-residue polypeptide: Glycerol-3-phosphate acyltransferase (824 aa).

The HXXXXD motif motif lies at 302–307 (CHRSHM).

It belongs to the GPAT/DAPAT family.

It localises to the cell inner membrane. It catalyses the reaction sn-glycerol 3-phosphate + an acyl-CoA = a 1-acyl-sn-glycero-3-phosphate + CoA. It participates in phospholipid metabolism; CDP-diacylglycerol biosynthesis; CDP-diacylglycerol from sn-glycerol 3-phosphate: step 1/3. The protein is Glycerol-3-phosphate acyltransferase of Actinobacillus pleuropneumoniae serotype 7 (strain AP76).